Reading from the N-terminus, the 269-residue chain is Aquaporin-1 (269 aa).

At 1–11 (MASEIKKKLFW) the chain is on the cytoplasmic side. Residues 12–29 (RAVVAEFLAMTLFVFISI) traverse the membrane as a helical segment. The Extracellular segment spans residues 30-46 (GSALGFNYPLERNQTLV). Residue Asn-42 is glycosylated (N-linked (GlcNAc...) asparagine). The helical transmembrane segment at 47–65 (QDNVKVSLAFGLSIATLAQ) threads the bilayer. The Cytoplasmic portion of the chain corresponds to 66–68 (SVG). Residues 69–82 (HISGAHLNPAVTLG) lie within the membrane without spanning it. The NPA 1 signature appears at 76–78 (NPA). The Cytoplasmic segment spans residues 83 to 90 (LLLSCQIS). The helical transmembrane segment at 91–109 (ILRAVMYIIAQCVGAIVAS) threads the bilayer. The Extracellular portion of the chain corresponds to 110-133 (AILSGITSSLLENSLGRNDLARGV). The helical transmembrane segment at 134-153 (NSGQGLGIEIIGTLQLVLCV) threads the bilayer. Residues 154–163 (LATTDRRRRD) lie on the Cytoplasmic side of the membrane. A helical transmembrane segment spans residues 164–181 (LGGSAPLAIGLSVALGHL). Over 182 to 186 (LAIDY) the chain is Extracellular. The stretch at 187-199 (TGCGINPARSFGS) is an intramembrane region. An NPA 2 motif is present at residues 192-194 (NPA). The Extracellular segment spans residues 200 to 206 (AVLTRNF). The N-linked (GlcNAc...) asparagine glycan is linked to Asn-205. The helical transmembrane segment at 207-224 (SNHWIFWVGPFIGSALAV) threads the bilayer. Over 225 to 269 (LIYDFILAPRSSDFTDRMKVWTSGQVEEYDLDADDINSRVEMKPK) the chain is Cytoplasmic. Phosphoserine is present on Ser-247. Position 253 is a phosphotyrosine (Tyr-253). Ser-262 is modified (phosphoserine).

Belongs to the MIP/aquaporin (TC 1.A.8) family. In terms of assembly, homotetramer; each monomer provides an independent water pore. Component of the ankyrin-1 complex in the erythrocyte, composed of ANK1, RHCE, RHAG, SLC4A1, EPB42, GYPA, GYPB and AQP1. Interacts with EPHB2; involved in endolymph production in the inner ear. Identified in a complex with STOM. Interacts (via the N-terminal) with ANK1 (via ANK 1-5 repeats). Interacts (via the C-terminal) with EPB42. Erythrocytes and renal tubules.

It is found in the cell membrane. It catalyses the reaction H2O(in) = H2O(out). The enzyme catalyses nitric oxide(out) = nitric oxide(in). The catalysed reaction is CO2(out) = CO2(in). It carries out the reaction glycerol(in) = glycerol(out). It catalyses the reaction H2O2(out) = H2O2(in). The enzyme catalyses K(+)(in) = K(+)(out). The catalysed reaction is Na(+)(in) = Na(+)(out). Its function is as follows. Forms a water channel that facilitates the transport of water across cell membranes, playing a crucial role in water homeostasis in various tissues. Could also be permeable to small solutes including hydrogen peroxide, glycerol and gases such as amonnia (NH3), nitric oxide (NO) and carbon dioxide (CO2). Recruited to the ankyrin-1 complex, a multiprotein complex of the erythrocyte membrane, it could be part of a CO2 metabolon, linking facilitated diffusion of CO2 across the membrane, anion exchange of Cl(-)/HCO3(-) and interconversion of dissolved CO2 and carbonic acid in the cytosol. In vitro, it shows non-selective gated cation channel activity and may be permeable to cations like K(+) and Na(+) in vivo. This Rattus norvegicus (Rat) protein is Aquaporin-1.